The following is a 450-amino-acid chain: Acyltransferase GLAUCE (450 aa).

Residues His-171 and Glu-394 each act as proton acceptor in the active site.

It belongs to the plant acyltransferase family. Restricted to the central cells of embryo sacs.

It is found in the cytoplasm. It localises to the nucleus. In terms of biological role, required for double fertilization of the egg cell and the central cell by two sperm cells, resulting in the formation of the embryo and the endosperm. Involved in the regulation of embryonic expression of PHE1. Essential in maternal tissues to ensure the paternal embryonic expression of several genes, including RPS5a and FAC1, both of which being essential for early embryo and endosperm development in fertilized seeds. The protein is Acyltransferase GLAUCE of Arabidopsis thaliana (Mouse-ear cress).